A 142-amino-acid chain; its full sequence is Large ribosomal subunit protein uL13 (142 aa).

Belongs to the universal ribosomal protein uL13 family. Part of the 50S ribosomal subunit.

This protein is one of the early assembly proteins of the 50S ribosomal subunit, although it is not seen to bind rRNA by itself. It is important during the early stages of 50S assembly. The polypeptide is Large ribosomal subunit protein uL13 (Pectobacterium atrosepticum (strain SCRI 1043 / ATCC BAA-672) (Erwinia carotovora subsp. atroseptica)).